A 246-amino-acid chain; its full sequence is MAESGAGYRVELAKTGRAECKGTVCGRSKIGKGDLRFGTFVDVGKFQSWKWRHWGCVTERVLRNVNKKFEGDIKNCLDGFNELNDPIVQEKILRAFEQGHVDEEDEERCRKMASDASEEKDRKIEEGELTSEEEKEPIQDLRKSHKRKSVEKSSVPNKKHKAERKRSPSPKIEILEDDEEIEDVASDKDEEEKPWSGDEEDDDELVVKDSEDETEGVSTIASQRPRRSARRKVDYAESGNEYSDSD.

A PARP-type; degenerate zinc finger spans residues 8–99 (YRVELAKTGR…EKILRAFEQG (92 aa)). The span at 103–126 (EEDEERCRKMASDASEEKDRKIEE) shows a compositional bias: basic and acidic residues. The interval 103-246 (EEDEERCRKM…ESGNEYSDSD (144 aa)) is disordered. Phosphothreonine is present on Thr-130. Ser-131 carries the post-translational modification Phosphoserine. A compositionally biased stretch (basic residues) spans 157-168 (NKKHKAERKRSP). A compositionally biased stretch (acidic residues) spans 175-184 (LEDDEEIEDV). Residues 185–196 (ASDKDEEEKPWS) are compositionally biased toward basic and acidic residues. Acidic residues predominate over residues 197 to 215 (GDEEDDDELVVKDSEDETE). Phosphoserine is present on residues Ser-243 and Ser-245.

Its subcellular location is the nucleus. The protein resides in the mitochondrion. This Schizosaccharomyces pombe (strain 972 / ATCC 24843) (Fission yeast) protein is PARP-type zinc finger-containing protein C2A9.07c.